Reading from the N-terminus, the 149-residue chain is UPF0178 protein Lmo1456 (149 aa).

It belongs to the UPF0178 family.

The protein is UPF0178 protein Lmo1456 of Listeria monocytogenes serovar 1/2a (strain ATCC BAA-679 / EGD-e).